The sequence spans 533 residues: GDP-fucose protein O-fucosyltransferase 4 (533 aa).

The Cytoplasmic portion of the chain corresponds to 1 to 20; that stretch reads MSAGCTQLVWGGRLHWGASH. Residues 21 to 37 form a helical; Signal-anchor for type II membrane protein membrane-spanning segment; that stretch reads LLSCLLALCALWVLAAA. At 38-533 the chain is on the lumenal side; sequence EPTEGGSANV…ETYIKRSMNH (496 aa). Asn148, Asn206, and Asn358 each carry an N-linked (GlcNAc...) asparagine glycan. A disulfide bridge connects residues Cys429 and Cys432. N-linked (GlcNAc...) asparagine glycosylation occurs at Asn511.

It belongs to the glycosyltransferase 10 family.

The protein resides in the endoplasmic reticulum membrane. It carries out the reaction L-threonyl-[protein] + GDP-beta-L-fucose = 3-O-(alpha-L-fucosyl)-L-threonyl-[protein] + GDP + H(+). The enzyme catalyses L-seryl-[protein] + GDP-beta-L-fucose = 3-O-(alpha-L-fucosyl)-L-seryl-[protein] + GDP + H(+). It functions in the pathway protein modification; protein glycosylation. Protein O-fucosyltransferase that specifically catalyzes O-fucosylation of serine or threonine residues in EMI domains of target proteins. Attaches fucose through an O-glycosidic linkage. O-fucosylation of EMI domain-containing proteins may be required for facilitating protein folding and secretion. This is GDP-fucose protein O-fucosyltransferase 4 (fut11) from Xenopus tropicalis (Western clawed frog).